The primary structure comprises 204 residues: High frequency lysogenization protein HflD homolog (204 aa).

Belongs to the HflD family.

Its subcellular location is the cytoplasm. It localises to the cell inner membrane. This chain is High frequency lysogenization protein HflD homolog, found in Actinobacillus succinogenes (strain ATCC 55618 / DSM 22257 / CCUG 43843 / 130Z).